A 473-amino-acid chain; its full sequence is Photosystem II CP43 reaction center protein (473 aa).

A propeptide spanning residues M1 to E14 is cleaved from the precursor. The residue at position 15 (T15) is an N-acetylthreonine. A Phosphothreonine modification is found at T15. A run of 5 helical transmembrane segments spans residues L69–A93, L134–N155, K178–T200, K255–S275, and W291–A312. A [CaMn4O5] cluster-binding site is contributed by E367. Residues R447 to P471 traverse the membrane as a helical segment.

Belongs to the PsbB/PsbC family. PsbC subfamily. PSII is composed of 1 copy each of membrane proteins PsbA, PsbB, PsbC, PsbD, PsbE, PsbF, PsbH, PsbI, PsbJ, PsbK, PsbL, PsbM, PsbT, PsbX, PsbY, PsbZ, Psb30/Ycf12, at least 3 peripheral proteins of the oxygen-evolving complex and a large number of cofactors. It forms dimeric complexes. Requires Binds multiple chlorophylls and provides some of the ligands for the Ca-4Mn-5O cluster of the oxygen-evolving complex. It may also provide a ligand for a Cl- that is required for oxygen evolution. PSII binds additional chlorophylls, carotenoids and specific lipids. as cofactor.

The protein resides in the plastid membrane. Functionally, one of the components of the core complex of photosystem II (PSII). It binds chlorophyll and helps catalyze the primary light-induced photochemical processes of PSII. PSII is a light-driven water:plastoquinone oxidoreductase, using light energy to abstract electrons from H(2)O, generating O(2) and a proton gradient subsequently used for ATP formation. The chain is Photosystem II CP43 reaction center protein from Cuscuta gronovii (Common dodder).